A 312-amino-acid chain; its full sequence is Glycine--tRNA ligase alpha subunit (312 aa).

The protein belongs to the class-II aminoacyl-tRNA synthetase family. As to quaternary structure, tetramer of two alpha and two beta subunits.

The protein resides in the cytoplasm. The catalysed reaction is tRNA(Gly) + glycine + ATP = glycyl-tRNA(Gly) + AMP + diphosphate. The protein is Glycine--tRNA ligase alpha subunit of Delftia acidovorans (strain DSM 14801 / SPH-1).